The following is a 1060-amino-acid chain: Protein FAM184B (1060 aa).

The segment covering methionine 1 to glycine 17 has biased composition (polar residues). The segment at methionine 1–alanine 24 is disordered. A coiled-coil region spans residues alanine 51–glutamate 159. The disordered stretch occupies residues leucine 165–proline 191. Coiled coils occupy residues glutamate 192–methionine 333 and methionine 402–glutamate 502. Disordered regions lie at residues glutamine 532–threonine 566, threonine 681–histidine 700, and glycine 762–glutamate 803. Composition is skewed to basic and acidic residues over residues leucine 536–alanine 554, threonine 681–serine 690, and aspartate 773–glycine 785. Residues leucine 584–glutamine 769 are a coiled coil. Positions glycine 806–histidine 934 form a coiled coil. 2 stretches are compositionally biased toward polar residues: residues serine 994–proline 1009 and lysine 1018–arginine 1030. The segment at serine 994–histidine 1050 is disordered.

Belongs to the FAM184 family.

In Homo sapiens (Human), this protein is Protein FAM184B (FAM184B).